The following is a 374-amino-acid chain: Putative zinc finger MYND domain-containing protein R331 (374 aa).

The Zn(2+) site is built by C328, C331, C341, C344, C350, C354, H362, and C366. Residues 328 to 366 (CFYCNKNIEKPVVCNKCFRIKYCSEKCQSEYNSYHSDDC) form an MYND-type zinc finger.

This is Putative zinc finger MYND domain-containing protein R331 from Acanthamoeba polyphaga (Amoeba).